Consider the following 343-residue polypeptide: tRNA N6-adenosine threonylcarbamoyltransferase (343 aa).

Positions 115 and 119 each coordinate Fe cation. Substrate is bound by residues 137 to 141 (IVSGG), D170, G183, D187, and N276. D304 is a Fe cation binding site.

The protein belongs to the KAE1 / TsaD family. Fe(2+) is required as a cofactor.

It is found in the cytoplasm. It catalyses the reaction L-threonylcarbamoyladenylate + adenosine(37) in tRNA = N(6)-L-threonylcarbamoyladenosine(37) in tRNA + AMP + H(+). In terms of biological role, required for the formation of a threonylcarbamoyl group on adenosine at position 37 (t(6)A37) in tRNAs that read codons beginning with adenine. Is involved in the transfer of the threonylcarbamoyl moiety of threonylcarbamoyl-AMP (TC-AMP) to the N6 group of A37, together with TsaE and TsaB. TsaD likely plays a direct catalytic role in this reaction. This Staphylococcus carnosus (strain TM300) protein is tRNA N6-adenosine threonylcarbamoyltransferase.